We begin with the raw amino-acid sequence, 557 residues long: Cytochrome P450 734A2 (557 aa).

Residues W13–A35 traverse the membrane as a helical segment. C495 contacts heme.

The protein belongs to the cytochrome P450 family. Heme is required as a cofactor. Expressed in roots, shoot apex, leaf sheaths and leaf blades.

Its subcellular location is the membrane. Cytochrome P450 involved in brassinosteroids (BRs) inactivation and regulation of BRs homeostasis. Is a multifunctional and multisubstrate enzyme that controls the endogenous bioactive BR content both by direct inactivation of castasterone (CS) and by decreasing the levels of BR precursors. Catalyzes the oxidation of carbon 22 hydroxylated BR intermediates to produce C26 oxidized metabolites. This is Cytochrome P450 734A2 (CYP734A2) from Oryza sativa subsp. japonica (Rice).